The primary structure comprises 209 residues: Large ribosomal subunit protein uL3 (209 aa).

Gln150 carries the post-translational modification N5-methylglutamine.

Belongs to the universal ribosomal protein uL3 family. Part of the 50S ribosomal subunit. Forms a cluster with proteins L14 and L19. Methylated by PrmB.

In terms of biological role, one of the primary rRNA binding proteins, it binds directly near the 3'-end of the 23S rRNA, where it nucleates assembly of the 50S subunit. The polypeptide is Large ribosomal subunit protein uL3 (Citrobacter koseri (strain ATCC BAA-895 / CDC 4225-83 / SGSC4696)).